The sequence spans 655 residues: p-hydroxybenzoic acid efflux pump subunit AaeB (655 aa).

11 consecutive transmembrane segments (helical) span residues 13 to 33 (FAVKLATAIVLALFVGFHFQL), 38 to 58 (WAVLTAAIVAAGPAFAAGGEP), 69 to 89 (LRIIGTFIGCIAGLVIIIAMI), 93 to 113 (LLMILVCCIWAGFCTWISSLV), 121 to 141 (WGLAGYTALIIVITIQPEPLL), 152 to 172 (EIVIGIVCAIMADLLFSPRSI), 370 to 390 (LFWLWTGWTSGSGAMVMIAVV), 407 to 427 (FIYGTLAALPLGLLYFLVIIP), 431 to 451 (QSMLLLCISLAVLGFFLGIEV), 459 to 479 (MGALASTINIIVLDNPMTFHF), and 482 to 502 (FLDSALGQIVGCVLAFTVILL).

The protein belongs to the aromatic acid exporter ArAE (TC 2.A.85) family.

The protein resides in the cell inner membrane. Its function is as follows. Forms an efflux pump with AaeA. Could function as a metabolic relief valve, allowing to eliminate certain compounds when they accumulate to high levels in the cell. The chain is p-hydroxybenzoic acid efflux pump subunit AaeB from Escherichia coli (strain SMS-3-5 / SECEC).